A 72-amino-acid polypeptide reads, in one-letter code: Translation initiation factor IF-1 1 (72 aa).

The region spanning 1 to 72 (MSKDDVIQMQ…TRARIVFRSK (72 aa)) is the S1-like domain.

It belongs to the IF-1 family. As to quaternary structure, component of the 30S ribosomal translation pre-initiation complex which assembles on the 30S ribosome in the order IF-2 and IF-3, IF-1 and N-formylmethionyl-tRNA(fMet); mRNA recruitment can occur at any time during PIC assembly.

The protein localises to the cytoplasm. Functionally, one of the essential components for the initiation of protein synthesis. Stabilizes the binding of IF-2 and IF-3 on the 30S subunit to which N-formylmethionyl-tRNA(fMet) subsequently binds. Helps modulate mRNA selection, yielding the 30S pre-initiation complex (PIC). Upon addition of the 50S ribosomal subunit IF-1, IF-2 and IF-3 are released leaving the mature 70S translation initiation complex. This is Translation initiation factor IF-1 1 from Bordetella avium (strain 197N).